Reading from the N-terminus, the 175-residue chain is MIEVEIKVKIDDKNKVVEQLKKLGFKFIKKKFQEDIYFNGIDRDFRETDEALRIRDEDGNFFVTYKGPKIDKISKTREEIEVKIEDKEKMRQIFKKLGFKEVPPIRKIREIYKKEDIEASIDDVEGLGLFLELEKSISDINEKDKVLEEMMEILKALNISKDNIIRKSYLELRGL.

Residues 1-175 (MIEVEIKVKI…RKSYLELRGL (175 aa)) enclose the CYTH domain. Tyr37 acts as the Proton acceptor in catalysis.

This sequence belongs to the adenylyl cyclase CyaB family.

The protein localises to the cytoplasm. The catalysed reaction is ATP = 3',5'-cyclic AMP + diphosphate. In terms of biological role, could catalyze the biosynthesis of cyclic AMP (cAMP) from ATP. The sequence is that of Putative adenylate cyclase MJ0240 from Methanocaldococcus jannaschii (strain ATCC 43067 / DSM 2661 / JAL-1 / JCM 10045 / NBRC 100440) (Methanococcus jannaschii).